Here is a 317-residue protein sequence, read N- to C-terminus: Phospho-N-acetylmuramoyl-pentapeptide-transferase (317 aa).

9 helical membrane passes run 4-24 (LIYS…ILIP), 49-69 (TPTM…AVIV), 76-96 (AMIA…DDTL), 112-132 (MILL…NPYI), 147-167 (LGVF…NAVN), 186-206 (FLAL…CAIL), 223-243 (IFMG…VAMI), 246-266 (LPLL…SVIF), and 297-317 (RVVS…FLSL).

The protein belongs to the glycosyltransferase 4 family. MraY subfamily. It depends on Mg(2+) as a cofactor.

It is found in the cell membrane. The catalysed reaction is UDP-N-acetyl-alpha-D-muramoyl-L-alanyl-gamma-D-glutamyl-meso-2,6-diaminopimeloyl-D-alanyl-D-alanine + di-trans,octa-cis-undecaprenyl phosphate = di-trans,octa-cis-undecaprenyl diphospho-N-acetyl-alpha-D-muramoyl-L-alanyl-D-glutamyl-meso-2,6-diaminopimeloyl-D-alanyl-D-alanine + UMP. The protein operates within cell wall biogenesis; peptidoglycan biosynthesis. In terms of biological role, catalyzes the initial step of the lipid cycle reactions in the biosynthesis of the cell wall peptidoglycan: transfers peptidoglycan precursor phospho-MurNAc-pentapeptide from UDP-MurNAc-pentapeptide onto the lipid carrier undecaprenyl phosphate, yielding undecaprenyl-pyrophosphoryl-MurNAc-pentapeptide, known as lipid I. This Clostridium kluyveri (strain NBRC 12016) protein is Phospho-N-acetylmuramoyl-pentapeptide-transferase.